A 183-amino-acid polypeptide reads, in one-letter code: Intermembrane phospholipid transport system binding protein MlaD (183 aa).

Over 1–7 (MQTKKNE) the chain is Cytoplasmic. Residues 8-28 (IWVGIFLLAALLAALFVCLKA) traverse the membrane as a helical; Signal-anchor for type II membrane protein segment. The Periplasmic portion of the chain corresponds to 29 to 183 (ANVTSIRTEP…ETTEPVGTTK (155 aa)). The segment at 39–116 (TYTLYATFDN…LGEQYLALNV (78 aa)) is MCE/MlaD. The disordered stretch occupies residues 155-183 (KGDDNKNSGDAPAAAPGNNETTEPVGTTK). A compositionally biased stretch (polar residues) spans 172-183 (NNETTEPVGTTK).

The protein belongs to the MlaD family. As to quaternary structure, the complex is composed of two ATP-binding proteins (MlaF), two transmembrane proteins (MlaE), two cytoplasmic solute-binding proteins (MlaB) and six periplasmic solute-binding proteins (MlaD).

It is found in the cell inner membrane. In terms of biological role, part of the ABC transporter complex MlaFEDB, which is involved in a phospholipid transport pathway that maintains lipid asymmetry in the outer membrane by retrograde trafficking of phospholipids from the outer membrane to the inner membrane. MlaD functions in substrate binding with strong affinity for phospholipids and modulates ATP hydrolytic activity of the complex. The polypeptide is Intermembrane phospholipid transport system binding protein MlaD (Escherichia coli O157:H7).